The following is a 348-amino-acid chain: Histidinol-phosphate aminotransferase (348 aa).

Residue K211 is modified to N6-(pyridoxal phosphate)lysine.

This sequence belongs to the class-II pyridoxal-phosphate-dependent aminotransferase family. Histidinol-phosphate aminotransferase subfamily. As to quaternary structure, homodimer. Pyridoxal 5'-phosphate is required as a cofactor.

It catalyses the reaction L-histidinol phosphate + 2-oxoglutarate = 3-(imidazol-4-yl)-2-oxopropyl phosphate + L-glutamate. Its pathway is amino-acid biosynthesis; L-histidine biosynthesis; L-histidine from 5-phospho-alpha-D-ribose 1-diphosphate: step 7/9. The sequence is that of Histidinol-phosphate aminotransferase from Pseudomonas entomophila (strain L48).